Consider the following 656-residue polypeptide: Rab proteins geranylgeranyltransferase component A 2 (656 aa).

2 disordered regions span residues methionine 188 to alanine 209 and proline 609 to asparagine 656. Over residues glutamate 639–asparagine 656 the composition is skewed to basic and acidic residues. A Phosphoserine modification is found at serine 649.

This sequence belongs to the Rab GDI family. As to quaternary structure, monomer. Heterotrimer composed of RABGGTA, RABGGTB and CHML; within this trimer, RABGGTA and RABGGTB form the catalytic component B, while CHML (component A) mediates Rab protein binding. Interacts with RAB1A, RAB7A and RAB27A, but has much lower affinity for RAB1A, RAB7A and RAB27A than CHM. Interacts with the non-phosphorylated forms of RAB3A, RAB3B, RAB3C, RAB3D, RAB5B, RAB5C, RAB8A, RAB8B, RAB10, RAB12, RAB35, and RAB43.

It localises to the cytoplasm. The protein resides in the cytosol. In terms of biological role, substrate-binding subunit (component A) of the Rab geranylgeranyltransferase (GGTase) complex. Binds unprenylated Rab proteins and presents the substrate peptide to the catalytic component B. The component A is thought to be regenerated by transferring its prenylated Rab back to the donor membrane. Less effective than CHM in supporting prenylation of Rab3 family. In Homo sapiens (Human), this protein is Rab proteins geranylgeranyltransferase component A 2 (CHML).